Reading from the N-terminus, the 357-residue chain is DNA replication and repair protein RecF (357 aa).

Gly30–Thr37 provides a ligand contact to ATP.

It belongs to the RecF family.

The protein localises to the cytoplasm. Functionally, the RecF protein is involved in DNA metabolism; it is required for DNA replication and normal SOS inducibility. RecF binds preferentially to single-stranded, linear DNA. It also seems to bind ATP. This is DNA replication and repair protein RecF from Salmonella schwarzengrund (strain CVM19633).